The following is a 296-amino-acid chain: Hca operon transcriptional activator HcaR (296 aa).

In terms of domain architecture, HTH lysR-type spans methionine 1–threonine 58. A DNA-binding region (H-T-H motif) is located at residues phenylalanine 18–aspartate 38.

Belongs to the LysR transcriptional regulatory family.

Transcriptional activator of the hca operon for 3-phenylpropionic acid catabolism. The protein is Hca operon transcriptional activator HcaR (hcaR) of Escherichia coli (strain K12).